The sequence spans 577 residues: Proline--tRNA ligase (577 aa).

It belongs to the class-II aminoacyl-tRNA synthetase family. ProS type 1 subfamily. Homodimer.

It is found in the cytoplasm. It carries out the reaction tRNA(Pro) + L-proline + ATP = L-prolyl-tRNA(Pro) + AMP + diphosphate. In terms of biological role, catalyzes the attachment of proline to tRNA(Pro) in a two-step reaction: proline is first activated by ATP to form Pro-AMP and then transferred to the acceptor end of tRNA(Pro). As ProRS can inadvertently accommodate and process non-cognate amino acids such as alanine and cysteine, to avoid such errors it has two additional distinct editing activities against alanine. One activity is designated as 'pretransfer' editing and involves the tRNA(Pro)-independent hydrolysis of activated Ala-AMP. The other activity is designated 'posttransfer' editing and involves deacylation of mischarged Ala-tRNA(Pro). The misacylated Cys-tRNA(Pro) is not edited by ProRS. The sequence is that of Proline--tRNA ligase from Herminiimonas arsenicoxydans.